Reading from the N-terminus, the 281-residue chain is NADPH-dependent 7-cyano-7-deazaguanine reductase (281 aa).

Substrate is bound at residue 87–89; the sequence is IES. Residue 89 to 90 participates in NADPH binding; sequence SK. The active-site Thioimide intermediate is the cysteine 188. Aspartate 195 serves as the catalytic Proton donor. Residue 227–228 coordinates substrate; that stretch reads HE. Residue 256–257 coordinates NADPH; that stretch reads RG. The interval 261–281 is disordered; that stretch reads INPYRSTEQAKPDHNHRMARQ. Positions 268-281 are enriched in basic and acidic residues; sequence EQAKPDHNHRMARQ.

Belongs to the GTP cyclohydrolase I family. QueF type 2 subfamily. As to quaternary structure, homodimer.

The protein localises to the cytoplasm. The enzyme catalyses 7-aminomethyl-7-carbaguanine + 2 NADP(+) = 7-cyano-7-deazaguanine + 2 NADPH + 3 H(+). Its pathway is tRNA modification; tRNA-queuosine biosynthesis. Its function is as follows. Catalyzes the NADPH-dependent reduction of 7-cyano-7-deazaguanine (preQ0) to 7-aminomethyl-7-deazaguanine (preQ1). This Vibrio vulnificus (strain YJ016) protein is NADPH-dependent 7-cyano-7-deazaguanine reductase.